Reading from the N-terminus, the 230-residue chain is Demethylmenaquinone methyltransferase (230 aa).

S-adenosyl-L-methionine is bound by residues T62, D80, 100–101 (DG), and S117.

This sequence belongs to the class I-like SAM-binding methyltransferase superfamily. MenG/UbiE family.

It catalyses the reaction a 2-demethylmenaquinol + S-adenosyl-L-methionine = a menaquinol + S-adenosyl-L-homocysteine + H(+). Its pathway is quinol/quinone metabolism; menaquinone biosynthesis; menaquinol from 1,4-dihydroxy-2-naphthoate: step 2/2. Its function is as follows. Methyltransferase required for the conversion of demethylmenaquinol (DMKH2) to menaquinol (MKH2). The polypeptide is Demethylmenaquinone methyltransferase (Corynebacterium glutamicum (strain ATCC 13032 / DSM 20300 / JCM 1318 / BCRC 11384 / CCUG 27702 / LMG 3730 / NBRC 12168 / NCIMB 10025 / NRRL B-2784 / 534)).